We begin with the raw amino-acid sequence, 697 residues long: Glycine--tRNA ligase beta subunit (697 aa).

The protein belongs to the class-II aminoacyl-tRNA synthetase family. Tetramer of two alpha and two beta subunits.

The protein resides in the cytoplasm. The enzyme catalyses tRNA(Gly) + glycine + ATP = glycyl-tRNA(Gly) + AMP + diphosphate. This is Glycine--tRNA ligase beta subunit from Solidesulfovibrio magneticus (strain ATCC 700980 / DSM 13731 / RS-1) (Desulfovibrio magneticus).